The following is a 570-amino-acid chain: Sulfite reductase [NADPH] hemoprotein beta-component (570 aa).

[4Fe-4S] cluster-binding residues include cysteine 434, cysteine 440, cysteine 479, and cysteine 483. A siroheme-binding site is contributed by cysteine 483.

This sequence belongs to the nitrite and sulfite reductase 4Fe-4S domain family. In terms of assembly, alpha(8)-beta(8). The alpha component is a flavoprotein, the beta component is a hemoprotein. The cofactor is siroheme. Requires [4Fe-4S] cluster as cofactor.

The enzyme catalyses hydrogen sulfide + 3 NADP(+) + 3 H2O = sulfite + 3 NADPH + 4 H(+). Its pathway is sulfur metabolism; hydrogen sulfide biosynthesis; hydrogen sulfide from sulfite (NADPH route): step 1/1. Functionally, component of the sulfite reductase complex that catalyzes the 6-electron reduction of sulfite to sulfide. This is one of several activities required for the biosynthesis of L-cysteine from sulfate. In Salmonella arizonae (strain ATCC BAA-731 / CDC346-86 / RSK2980), this protein is Sulfite reductase [NADPH] hemoprotein beta-component.